A 416-amino-acid chain; its full sequence is UDP-N-acetylglucosamine 1-carboxyvinyltransferase (416 aa).

A phosphoenolpyruvate-binding site is contributed by 22–23 (KN). R92 serves as a coordination point for UDP-N-acetyl-alpha-D-glucosamine. The active-site Proton donor is the C116. The residue at position 116 (C116) is a 2-(S-cysteinyl)pyruvic acid O-phosphothioketal. Residues 121–125 (RPVDQ), D304, and I326 each bind UDP-N-acetyl-alpha-D-glucosamine.

This sequence belongs to the EPSP synthase family. MurA subfamily.

The protein localises to the cytoplasm. It catalyses the reaction phosphoenolpyruvate + UDP-N-acetyl-alpha-D-glucosamine = UDP-N-acetyl-3-O-(1-carboxyvinyl)-alpha-D-glucosamine + phosphate. It participates in cell wall biogenesis; peptidoglycan biosynthesis. In terms of biological role, cell wall formation. Adds enolpyruvyl to UDP-N-acetylglucosamine. The sequence is that of UDP-N-acetylglucosamine 1-carboxyvinyltransferase from Janthinobacterium sp. (strain Marseille) (Minibacterium massiliensis).